The following is a 318-amino-acid chain: NADH-ubiquinone oxidoreductase chain 1 (318 aa).

Helical transmembrane passes span 2–22 (FLMNMLCLIIPILLAMAFLTL), 37–57 (PNIVGPYGLLQPIADAIKLFI), 69–89 (LMFTLAPMLAFSLALSMWIPM), 100–120 (LGVLFILALSSLAVYSILWSG), 136–156 (VAQTISYEVTLAIILLSTMMM), 171–191 (HMWLIFPLWPLAMMWFISTLA), 206–226 (ELVSGFNVEYAAGPFALFFMA), 253–273 (ELFTANFVTKTLALTMAFLWI), and 294–314 (LPLTLALCMLHVSLPTVSAGI).

This sequence belongs to the complex I subunit 1 family.

It is found in the mitochondrion inner membrane. It carries out the reaction a ubiquinone + NADH + 5 H(+)(in) = a ubiquinol + NAD(+) + 4 H(+)(out). In terms of biological role, core subunit of the mitochondrial membrane respiratory chain NADH dehydrogenase (Complex I) that is believed to belong to the minimal assembly required for catalysis. Complex I functions in the transfer of electrons from NADH to the respiratory chain. The immediate electron acceptor for the enzyme is believed to be ubiquinone. This chain is NADH-ubiquinone oxidoreductase chain 1 (MT-ND1), found in Tolypeutes matacus (Southern three-banded armadillo).